The sequence spans 821 residues: Kinetochore protein SLK19 (821 aa).

Disordered stretches follow at residues 1-52 (MNEV…SQFV) and 99-153 (FDDK…NDKE). T7 is modified (phosphothreonine; by CDC28). Residues 15-51 (QAQQREQNSENCSQERNPRTFNSEPDSSFNSPGSSQF) show a composition bias toward polar residues. 2 stretches are compositionally biased toward basic and acidic residues: residues 99–122 (FDDK…DKHV) and 136–153 (SSEK…NDKE). Phosphoserine occurs at positions 188 and 189. The residue at position 201 (S201) is a Phosphoserine; by CDC28. Residue S216 is modified to Phosphoserine. T273 carries the phosphothreonine modification. Disordered regions lie at residues 274–298 (PLYE…DDNQ) and 699–720 (EQNN…RDDE). S283 bears the Phosphoserine mark. Residues 310–821 (AKRNEELTDQ…LLKLLENEKK (512 aa)) are a coiled coil.

Post-translationally, cleaved by ESP1 at the onset of anaphase. Phosphorylated by CDC5/Polo-like kinase at the onset of anaphase. Phosphorylation takes places at proximity to cleavage sites and is required for an efficient cleavage by ESP1. Phosphorylated also by CDC28.

The protein localises to the chromosome. The protein resides in the centromere. Its subcellular location is the kinetochore. It is found in the cytoplasm. It localises to the cytoskeleton. The protein localises to the microtubule organizing center. The protein resides in the spindle pole body. Has a role in spindle assembly and stability. Required to ensure a timely exit form mitosis. Essential to maintain pre-anaphase spindle polarity. Associates to the plus ends of the microtubules at the kinetochore and spindle midzone. A component of the FEAR (CDC14 Early Anaphase Release) network which promotes CDC14 release from the nucleolus during early anaphase. Required for proper chromosome segregation during meiosis I where it prevents premature sister chromatid separation. This Saccharomyces cerevisiae (strain ATCC 204508 / S288c) (Baker's yeast) protein is Kinetochore protein SLK19 (SLK19).